The following is a 95-amino-acid chain: Large ribosomal subunit protein bL28 (95 aa).

This sequence belongs to the bacterial ribosomal protein bL28 family.

The polypeptide is Large ribosomal subunit protein bL28 (Dinoroseobacter shibae (strain DSM 16493 / NCIMB 14021 / DFL 12)).